Consider the following 150-residue polypeptide: Single-stranded DNA-binding protein rim1, mitochondrial (150 aa).

The N-terminal 22 residues, M1–Y22, are a transit peptide targeting the mitochondrion. Residues I25–P125 enclose the SSB domain. The disordered stretch occupies residues N127–F150. The segment covering K128–L141 has biased composition (basic and acidic residues).

The protein localises to the mitochondrion. This protein binds preferentially and cooperatively to ss-DNA. Involved in mitochondrial DNA replication. The protein is Single-stranded DNA-binding protein rim1, mitochondrial (rim1) of Schizosaccharomyces pombe (strain 972 / ATCC 24843) (Fission yeast).